Reading from the N-terminus, the 26-residue chain is Melittin (26 aa).

The residue at position 1 (G1) is an N-formylglycine; partial. Q26 carries the glutamine amide modification.

Belongs to the melittin family. Monomer (in solution and for integration into membranes), homotetramer (in solution and potentially as a toroidal pore in membranes), and potenially homomultimer (as a toroidal pore in membranes). In terms of tissue distribution, expressed by the venom gland.

The protein resides in the secreted. It localises to the target cell membrane. Its function is as follows. Main toxin of bee venom with strong hemolytic activity and antimicrobial activity. It has enhancing effects on bee venom phospholipase A2 activity. This amphipathic toxin binds to negatively charged membrane surface and forms pore by inserting into lipid bilayers inducing the leakage of ions and molecules and the enhancement of permeability that ultimately leads to cell lysis. It acts as a voltage-gated pore with higher selectivity for anions over cations. The ion conductance has been shown to be voltage-dependent. Self-association of melittin in membranes is promoted by high ionic strength, but not by the presence of negatively charged lipids. In vivo, intradermal injection into healthy human volunteers produce sharp pain sensation and an inflammatory response. It produces pain by activating primary nociceptor cells directly and indirectly due to its ability to activate plasma membrane phospholipase A2 and its pore-forming activity. This is Melittin (MELT) from Apis florea (Dwarf honeybee).